A 90-amino-acid chain; its full sequence is uncharacterized protein (90 aa).

Positions 1 to 21 (MFKFSIPLLLFIFLFFSCINS) are cleaved as a signal peptide. The disordered stretch occupies residues 56–90 (SNEKLPERILSGSSGSCSSCSISSSNGSSSRSSKQ). A compositionally biased stretch (low complexity) spans 66–90 (SGSSGSCSSCSISSSNGSSSRSSKQ). Asn-81 carries N-linked (GlcNAc...) asparagine glycosylation.

This is an uncharacterized protein from Dictyostelium discoideum (Social amoeba).